A 473-amino-acid polypeptide reads, in one-letter code: Photosystem II CP43 reaction center protein (473 aa).

Positions methionine 1–glutamate 14 are excised as a propeptide. At threonine 15 the chain carries N-acetylthreonine. A Phosphothreonine modification is found at threonine 15. 5 consecutive transmembrane segments (helical) span residues leucine 69 to alanine 93, leucine 134 to asparagine 155, lysine 178 to threonine 200, lysine 255 to serine 275, and tryptophan 291 to alanine 312. A [CaMn4O5] cluster-binding site is contributed by glutamate 367. The propeptide occupies leucine 426–asparagine 473. A helical membrane pass occupies residues arginine 447–proline 471.

This sequence belongs to the PsbB/PsbC family. PsbC subfamily. As to quaternary structure, PSII is composed of 1 copy each of membrane proteins PsbA, PsbB, PsbC, PsbD, PsbE, PsbF, PsbH, PsbI, PsbJ, PsbK, PsbL, PsbM, PsbT, PsbX, PsbY, PsbZ, Psb30/Ycf12, at least 3 peripheral proteins of the oxygen-evolving complex and a large number of cofactors. It forms dimeric complexes. Binds multiple chlorophylls and provides some of the ligands for the Ca-4Mn-5O cluster of the oxygen-evolving complex. It may also provide a ligand for a Cl- that is required for oxygen evolution. PSII binds additional chlorophylls, carotenoids and specific lipids. serves as cofactor. Over time a tryptophan in the fifth lumenal loop is converted to 2-hydroxy-2,3-dihydrotryptophan, 2-oxo-2,3-dihydrotryptophan, and kynurenine by oxidizing species from the active site. This oxidation targets the protein for turnover.

The protein resides in the plastid. The protein localises to the chloroplast thylakoid membrane. Functionally, one of the components of the core complex of photosystem II (PSII). It binds chlorophyll and helps catalyze the primary light-induced photochemical processes of PSII. PSII is a light-driven water:plastoquinone oxidoreductase, using light energy to abstract electrons from H(2)O, generating O(2) and a proton gradient subsequently used for ATP formation. The polypeptide is Photosystem II CP43 reaction center protein (Spinacia oleracea (Spinach)).